The sequence spans 267 residues: Tryptophan synthase alpha chain (267 aa).

Residues E47 and D58 each act as proton acceptor in the active site.

The protein belongs to the TrpA family. In terms of assembly, tetramer of two alpha and two beta chains.

It carries out the reaction (1S,2R)-1-C-(indol-3-yl)glycerol 3-phosphate + L-serine = D-glyceraldehyde 3-phosphate + L-tryptophan + H2O. The protein operates within amino-acid biosynthesis; L-tryptophan biosynthesis; L-tryptophan from chorismate: step 5/5. Its function is as follows. The alpha subunit is responsible for the aldol cleavage of indoleglycerol phosphate to indole and glyceraldehyde 3-phosphate. The protein is Tryptophan synthase alpha chain of Chlorobium phaeovibrioides (strain DSM 265 / 1930) (Prosthecochloris vibrioformis (strain DSM 265)).